Reading from the N-terminus, the 365-residue chain is Aminomethyltransferase (365 aa).

This sequence belongs to the GcvT family. As to quaternary structure, the glycine cleavage system is composed of four proteins: P, T, L and H.

The enzyme catalyses N(6)-[(R)-S(8)-aminomethyldihydrolipoyl]-L-lysyl-[protein] + (6S)-5,6,7,8-tetrahydrofolate = N(6)-[(R)-dihydrolipoyl]-L-lysyl-[protein] + (6R)-5,10-methylene-5,6,7,8-tetrahydrofolate + NH4(+). Its function is as follows. The glycine cleavage system catalyzes the degradation of glycine. The sequence is that of Aminomethyltransferase from Parafrankia sp. (strain EAN1pec).